The primary structure comprises 139 residues: ATP synthase epsilon chain (139 aa).

The protein belongs to the ATPase epsilon chain family. F-type ATPases have 2 components, CF(1) - the catalytic core - and CF(0) - the membrane proton channel. CF(1) has five subunits: alpha(3), beta(3), gamma(1), delta(1), epsilon(1). CF(0) has three main subunits: a, b and c.

Its subcellular location is the cell inner membrane. Functionally, produces ATP from ADP in the presence of a proton gradient across the membrane. The protein is ATP synthase epsilon chain of Shigella boydii serotype 18 (strain CDC 3083-94 / BS512).